The sequence spans 60 residues: Large ribosomal subunit protein bL32 (60 aa).

The segment at 1–44 (MAVQQNKKSRSARDMRRSHDALEASTLSVEKTTGEVHLRHHVSP) is disordered. Positions 11–22 (SARDMRRSHDAL) are enriched in basic and acidic residues.

Belongs to the bacterial ribosomal protein bL32 family.

The sequence is that of Large ribosomal subunit protein bL32 from Pseudomonas fluorescens (strain SBW25).